A 472-amino-acid chain; its full sequence is Transmembrane protein 8B (472 aa).

A compositionally biased stretch (low complexity) spans 1–10 (MNMPQSLGTQ). Positions 1–24 (MNMPQSLGTQPLPPEPPSLGTPIE) are disordered. Topologically, residues 1–233 (MNMPQSLGTQ…ADALTYGFQL (233 aa)) are extracellular. Residue Asn-100 is glycosylated (N-linked (GlcNAc...) asparagine). Positions 182-221 (FLSPCVDDCGPYGQCKLLRTHNYLYAACECKAGWRGWGCT) constitute an EGF-like domain. 3 cysteine pairs are disulfide-bonded: Cys-186–Cys-196, Cys-190–Cys-209, and Cys-211–Cys-220. Residues 234 to 254 (LSTLLLCLSNLMFLPPVVLAI) form a helical membrane-spanning segment. The Cytoplasmic segment spans residues 255–257 (RSR). The chain crosses the membrane as a helical span at residues 258–277 (YVLEAAVYTFTMFFSTFYHA). The Extracellular portion of the chain corresponds to 278–292 (CDQPGIVVFCIMDYD). The chain crosses the membrane as a helical span at residues 293-313 (VLQFCDFLGSLMSVWVTVIAM). Topologically, residues 314-315 (AR) are cytoplasmic. The chain crosses the membrane as a helical span at residues 316 to 336 (LQPVIKQVLYLLGAMLLSMAL). At 337-342 (QLDRHG) the chain is on the extracellular side. The helical transmembrane segment at 343-363 (LWNLLGPSLFALGILATAWTV) threads the bilayer. The Cytoplasmic segment spans residues 364–379 (RSVRRRHCYPPTWRRW). Residues 380–400 (LFYLCPGSLIAGSAVLLYAFV) traverse the membrane as a helical segment. The Extracellular segment spans residues 401 to 405 (ETRDN). Residues 406–426 (YFYIHSIWHMLIAGSVGFLLP) form a helical membrane-spanning segment. Residues 427 to 472 (PRAKTDRRVPSGARARGCGYQLCINEQEELGLVGPGGTTVSSICVS) are Cytoplasmic-facing.

The protein belongs to the TMEM8 family. In terms of assembly, may interact with EZR. N-glycosylated.

It localises to the cell membrane. The protein resides in the cytoplasm. It is found in the nucleus. Its subcellular location is the mitochondrion. The protein localises to the endoplasmic reticulum. May function as a regulator of the EGFR pathway. Probable tumor suppressor which may function in cell growth, proliferation and adhesion. The protein is Transmembrane protein 8B (Tmem8b) of Mus musculus (Mouse).